The primary structure comprises 616 residues: Dihydroxy-acid dehydratase (616 aa).

D81 contacts Mg(2+). A [2Fe-2S] cluster-binding site is contributed by C122. Mg(2+)-binding residues include D123 and K124. K124 is modified (N6-carboxylysine). C195 is a binding site for [2Fe-2S] cluster. E491 lines the Mg(2+) pocket. The active-site Proton acceptor is S517.

It belongs to the IlvD/Edd family. Homodimer. Requires [2Fe-2S] cluster as cofactor. The cofactor is Mg(2+).

It catalyses the reaction (2R)-2,3-dihydroxy-3-methylbutanoate = 3-methyl-2-oxobutanoate + H2O. The catalysed reaction is (2R,3R)-2,3-dihydroxy-3-methylpentanoate = (S)-3-methyl-2-oxopentanoate + H2O. Its pathway is amino-acid biosynthesis; L-isoleucine biosynthesis; L-isoleucine from 2-oxobutanoate: step 3/4. It functions in the pathway amino-acid biosynthesis; L-valine biosynthesis; L-valine from pyruvate: step 3/4. Its function is as follows. Functions in the biosynthesis of branched-chain amino acids. Catalyzes the dehydration of (2R,3R)-2,3-dihydroxy-3-methylpentanoate (2,3-dihydroxy-3-methylvalerate) into 2-oxo-3-methylpentanoate (2-oxo-3-methylvalerate) and of (2R)-2,3-dihydroxy-3-methylbutanoate (2,3-dihydroxyisovalerate) into 2-oxo-3-methylbutanoate (2-oxoisovalerate), the penultimate precursor to L-isoleucine and L-valine, respectively. This chain is Dihydroxy-acid dehydratase, found in Escherichia coli (strain K12 / MC4100 / BW2952).